We begin with the raw amino-acid sequence, 46 residues long: Mu-segestritoxin-Sf1d (46 aa).

Intrachain disulfides connect C3–C19, C10–C22, C18–C42, and C24–C40. The interval 31 to 33 (RPW) is keys region for toxin activity.

The protein belongs to the neurotoxin 16 (SFI) family. Expressed by the venom gland.

Its subcellular location is the secreted. Functionally, insecticidal toxin. It inhibits insect voltage-gated sodium channels (Nav) by partially blocking the channel pore in DUM neurons from the American cockroach, not by acting as a gating modifier. The inhibition is only partially reversible after prolonged washout. In vivo, the toxin causes flaccid paralysis followed by death when injected into Heliothis virescens larvae. It also causes uncoordinated movements followed by full paralysis to sheep blowflies (Lucilia cuprina). When the toxin is fused to snowdrop lectin, it is orally active against larvae of the tomato moth (Laconobia oleracea), the rice brown planthopper (Nilaparvata lugens), and the peach-potato aphid (Myzus persicae). This chain is Mu-segestritoxin-Sf1d, found in Segestria florentina (Tube-web spider).